We begin with the raw amino-acid sequence, 207 residues long: Holliday junction branch migration complex subunit RuvA (207 aa).

Residues 1–64 (MIGRLTGILA…ETSQQLFGFS (64 aa)) are domain I. A domain II region spans residues 65–142 (SQQDRELFRM…ALDTTPSEHS (78 aa)). Residues 143 to 157 (PTGEGAGIVRVDPVI) form a flexible linker region. A domain III region spans residues 158–207 (NTNVIIADAESALIGLGYKPTEAAKAVSAAYNDTITTSEDLIRAALKGMI).

This sequence belongs to the RuvA family. In terms of assembly, homotetramer. Forms an RuvA(8)-RuvB(12)-Holliday junction (HJ) complex. HJ DNA is sandwiched between 2 RuvA tetramers; dsDNA enters through RuvA and exits via RuvB. An RuvB hexamer assembles on each DNA strand where it exits the tetramer. Each RuvB hexamer is contacted by two RuvA subunits (via domain III) on 2 adjacent RuvB subunits; this complex drives branch migration. In the full resolvosome a probable DNA-RuvA(4)-RuvB(12)-RuvC(2) complex forms which resolves the HJ.

It is found in the cytoplasm. Functionally, the RuvA-RuvB-RuvC complex processes Holliday junction (HJ) DNA during genetic recombination and DNA repair, while the RuvA-RuvB complex plays an important role in the rescue of blocked DNA replication forks via replication fork reversal (RFR). RuvA specifically binds to HJ cruciform DNA, conferring on it an open structure. The RuvB hexamer acts as an ATP-dependent pump, pulling dsDNA into and through the RuvAB complex. HJ branch migration allows RuvC to scan DNA until it finds its consensus sequence, where it cleaves and resolves the cruciform DNA. The protein is Holliday junction branch migration complex subunit RuvA of Saccharophagus degradans (strain 2-40 / ATCC 43961 / DSM 17024).